Here is a 274-residue protein sequence, read N- to C-terminus: NH(3)-dependent NAD(+) synthetase (274 aa).

Position 46 to 53 (46 to 53 (GISGGQDS)) interacts with ATP. D52 contacts Mg(2+). R140 lines the deamido-NAD(+) pocket. Residue T160 coordinates ATP. A Mg(2+)-binding site is contributed by E165. Residues K173 and D180 each coordinate deamido-NAD(+). ATP contacts are provided by K189 and T211. 260 to 261 (HK) is a binding site for deamido-NAD(+).

This sequence belongs to the NAD synthetase family. In terms of assembly, homodimer.

The catalysed reaction is deamido-NAD(+) + NH4(+) + ATP = AMP + diphosphate + NAD(+) + H(+). The protein operates within cofactor biosynthesis; NAD(+) biosynthesis; NAD(+) from deamido-NAD(+) (ammonia route): step 1/1. In terms of biological role, catalyzes the ATP-dependent amidation of deamido-NAD to form NAD. Uses ammonia as a nitrogen source. The chain is NH(3)-dependent NAD(+) synthetase from Streptococcus equi subsp. equi (strain 4047).